Reading from the N-terminus, the 1316-residue chain is Serine/threonine-protein kinase 36 (1316 aa).

The Protein kinase domain maps to 4-254; sequence YHVLEMIGEG…WPDLLHHPFI (251 aa). Residues 10 to 18 and K33 contribute to the ATP site; that span reads IGEGSFGRV. The active-site Proton acceptor is D125. A disordered region spans residues 389 to 418; that stretch reads QGFPEPRPEAMGRQSTDVVDPENEEPDSDD. Positions 407–418 are enriched in acidic residues; it reads VDPENEEPDSDD.

This sequence belongs to the protein kinase superfamily. Ser/Thr protein kinase family. Interacts with SPAG16 and KIF27. The cofactor is Mg(2+). In terms of tissue distribution, weakly expressed in the heart and thymus, present at moderate to high levels in the lungs, pancreas, and kidneys and at higher levels in the brain and cerebellum. Very highly expressed in the testis.

It is found in the cytoplasm. The protein localises to the nucleus. It localises to the cytoskeleton. Its subcellular location is the cilium axoneme. The catalysed reaction is L-seryl-[protein] + ATP = O-phospho-L-seryl-[protein] + ADP + H(+). It catalyses the reaction L-threonyl-[protein] + ATP = O-phospho-L-threonyl-[protein] + ADP + H(+). Its function is as follows. Serine/threonine protein kinase which plays an important role in the sonic hedgehog (Shh) pathway by regulating the activity of GLI transcription factors. Controls the activity of the transcriptional regulators GLI1, GLI2 and GLI3 by opposing the effect of SUFU and promoting their nuclear localization. GLI2 requires an additional function of STK36 to become transcriptionally active, but the enzyme does not need to possess an active kinase catalytic site for this to occur. Required for postnatal development, possibly by regulating the homeostasis of cerebral spinal fluid or ciliary function. Essential for construction of the central pair apparatus of motile cilia. This is Serine/threonine-protein kinase 36 from Mus musculus (Mouse).